We begin with the raw amino-acid sequence, 614 residues long: Dihydroxy-acid dehydratase (614 aa).

D81 lines the Mg(2+) pocket. C122 contributes to the [2Fe-2S] cluster binding site. Mg(2+) contacts are provided by D123 and K124. K124 carries the post-translational modification N6-carboxylysine. C195 serves as a coordination point for [2Fe-2S] cluster. Residue E491 coordinates Mg(2+). S517 serves as the catalytic Proton acceptor.

This sequence belongs to the IlvD/Edd family. In terms of assembly, homodimer. [2Fe-2S] cluster serves as cofactor. It depends on Mg(2+) as a cofactor.

It carries out the reaction (2R)-2,3-dihydroxy-3-methylbutanoate = 3-methyl-2-oxobutanoate + H2O. It catalyses the reaction (2R,3R)-2,3-dihydroxy-3-methylpentanoate = (S)-3-methyl-2-oxopentanoate + H2O. It functions in the pathway amino-acid biosynthesis; L-isoleucine biosynthesis; L-isoleucine from 2-oxobutanoate: step 3/4. Its pathway is amino-acid biosynthesis; L-valine biosynthesis; L-valine from pyruvate: step 3/4. In terms of biological role, functions in the biosynthesis of branched-chain amino acids. Catalyzes the dehydration of (2R,3R)-2,3-dihydroxy-3-methylpentanoate (2,3-dihydroxy-3-methylvalerate) into 2-oxo-3-methylpentanoate (2-oxo-3-methylvalerate) and of (2R)-2,3-dihydroxy-3-methylbutanoate (2,3-dihydroxyisovalerate) into 2-oxo-3-methylbutanoate (2-oxoisovalerate), the penultimate precursor to L-isoleucine and L-valine, respectively. The sequence is that of Dihydroxy-acid dehydratase from Rhodopseudomonas palustris (strain BisA53).